We begin with the raw amino-acid sequence, 218 residues long: Ras-related protein RABA1i (218 aa).

20–27 (GDSGVGKS) provides a ligand contact to GTP. Residues 42-50 (SRATIGVEF) carry the Effector region motif. Residues 68–72 (DTAGQ), 126–129 (NKAD), and 156–157 (SA) each bind GTP. 2 S-geranylgeranyl cysteine lipidation sites follow: Cys215 and Cys216.

This sequence belongs to the small GTPase superfamily. Rab family.

The protein localises to the cell membrane. Functionally, intracellular vesicle trafficking and protein transport. This chain is Ras-related protein RABA1i (RABA1I), found in Arabidopsis thaliana (Mouse-ear cress).